The sequence spans 539 residues: Transcription factor LG2 (539 aa).

Positions 115–125 (MRQQQQLHSGN) are enriched in polar residues. Disordered stretches follow at residues 115–140 (MRQQ…SAQN) and 181–246 (KPGL…KSRL). Composition is skewed to low complexity over residues 126–137 (SQSVGSTTDSSS) and 192–205 (QQQH…QQQL). The segment covering 219–242 (TRKDGKSVDAKTERRLAQNREAAR) has biased composition (basic and acidic residues). One can recognise a bZIP domain in the interval 227-271 (DAKTERRLAQNREAARKSRLRKKAYVQNLETSRVRLQQIEQELQR). The segment at 229-249 (KTERRLAQNREAARKSRLRKK) is basic motif. Residues 255–269 (LETSRVRLQQIEQEL) are leucine-zipper. A DOG1 domain is found at 292–506 (AAMFDMEYAR…RALSNLWSSR (215 aa)). Residues 513–539 (GTESVSPTGTELQPMHNQPQQNQYSGF) are disordered.

The protein belongs to the bZIP family. In terms of assembly, interacts with NPR1/NH1 and NPR3/NH3.

The protein localises to the nucleus. Functionally, transcriptional regulator involved in defense response. Acts as a transcriptional activator in vitro. The chain is Transcription factor LG2 from Oryza sativa subsp. japonica (Rice).